Consider the following 132-residue polypeptide: Fatty acid-binding protein, intestinal (132 aa).

N-acetylalanine is present on A2. Hexadecanoate-binding residues include W83 and R107. Residues W83 and R107 each contribute to the tetradecanoate site.

It belongs to the calycin superfamily. Fatty-acid binding protein (FABP) family. Expressed in the small intestine and at much lower levels in the large intestine. Highest expression levels in the jejunum.

The protein resides in the cytoplasm. Its function is as follows. FABPs are thought to play a role in the intracellular transport of long-chain fatty acids and their acyl-CoA esters. FABP2 is probably involved in triglyceride-rich lipoprotein synthesis. Binds saturated long-chain fatty acids with a high affinity, but binds with a lower affinity to unsaturated long-chain fatty acids. FABP2 may also help maintain energy homeostasis by functioning as a lipid sensor. The polypeptide is Fatty acid-binding protein, intestinal (FABP2) (Homo sapiens (Human)).